A 332-amino-acid polypeptide reads, in one-letter code: Processive diacylglycerol alpha-glucosyltransferase (332 aa).

It belongs to the glycosyltransferase group 1 family. Glycosyltransferase 4 subfamily. Mg(2+) serves as cofactor.

The protein localises to the cell membrane. The catalysed reaction is a 1,2-diacyl-sn-glycerol + UDP-alpha-D-glucose = a 1,2-diacyl-3-O-(alpha-D-glucopyranosyl)-sn-glycerol + UDP + H(+). It catalyses the reaction a 1,2-diacyl-3-O-(alpha-D-glucopyranosyl)-sn-glycerol + UDP-alpha-D-glucose = a 1,2-diacyl-3-O-[alpha-D-glucosyl-(1-&gt; 2)-alpha-D-glucosyl]-sn-glycerol + UDP + H(+). Its pathway is glycolipid metabolism; diglucosyl-diacylglycerol biosynthesis. Activated by the negatively charged lipids phosphatidylglycerol (PG), cardiolipin (CL), nonbilayer-prone 1,3-DAG, 1,2-dioleoylphosphatidylglycerol (DOPG) and 1,2-dioleoylphosphatidylserine (DOPS). Inhibited by 1,2-diacyl-3-O-(alpha-D-galactopyranosyl)-sn-glycerol, 1,2-diacyl-3-O-[6-O-acyl(alpha-D-glucopyranosyl)]-sn-glycerol and 1,2-diacyl-3-O-[alpha-D-glucopyranosyl-(1-&gt;2)-O-(6-O-acyl-alpha-D-glucopyranosyl)]-sn-glycerol. Processive glucosyltransferase involved in the biosynthesis of both the non-bilayer-prone alpha-monoglucosyldiacylglycerol and the bilayer-forming membrane lipid alpha-diglucosyldiacylglycerol. These are major components for maintaining the anionic lipid surface charge density, for balancing the bilayer to non-bilayer phase equilibria and for keeping a constant lipid bilayer spontaneous curvature (curvature packing stress). Catalyzes the transfer of a glucosyl residue from UDP-Glc to diacylglycerol (DAG) acceptor to form the corresponding alpha-glucosyl-DAG (1,2-diacyl-3-O-(alpha-D-glucopyranosyl)-sn-glycerol), which then acts as acceptor to give alpha-diglucosyl-DAG product (3-O-(alpha-D-glucopyranosyl-alpha-(1-&gt;2)-D-glucopyranosyl)-1,2-diacyl-sn-glycerol). It can only use UDP-Glc as sugar donor. The polypeptide is Processive diacylglycerol alpha-glucosyltransferase (dgs) (Acholeplasma laidlawii).